A 95-amino-acid chain; its full sequence is Aspartyl/glutamyl-tRNA(Asn/Gln) amidotransferase subunit C (95 aa).

This sequence belongs to the GatC family. As to quaternary structure, heterotrimer of A, B and C subunits.

It carries out the reaction L-glutamyl-tRNA(Gln) + L-glutamine + ATP + H2O = L-glutaminyl-tRNA(Gln) + L-glutamate + ADP + phosphate + H(+). It catalyses the reaction L-aspartyl-tRNA(Asn) + L-glutamine + ATP + H2O = L-asparaginyl-tRNA(Asn) + L-glutamate + ADP + phosphate + 2 H(+). Its function is as follows. Allows the formation of correctly charged Asn-tRNA(Asn) or Gln-tRNA(Gln) through the transamidation of misacylated Asp-tRNA(Asn) or Glu-tRNA(Gln) in organisms which lack either or both of asparaginyl-tRNA or glutaminyl-tRNA synthetases. The reaction takes place in the presence of glutamine and ATP through an activated phospho-Asp-tRNA(Asn) or phospho-Glu-tRNA(Gln). In Nitrobacter hamburgensis (strain DSM 10229 / NCIMB 13809 / X14), this protein is Aspartyl/glutamyl-tRNA(Asn/Gln) amidotransferase subunit C.